Here is a 300-residue protein sequence, read N- to C-terminus: 4-hydroxy-tetrahydrodipicolinate synthase (300 aa).

Pyruvate is bound at residue Thr-55. Tyr-143 (proton donor/acceptor) is an active-site residue. The Schiff-base intermediate with substrate role is filled by Lys-171. Residue Ile-211 coordinates pyruvate.

The protein belongs to the DapA family. Homotetramer; dimer of dimers.

Its subcellular location is the cytoplasm. It catalyses the reaction L-aspartate 4-semialdehyde + pyruvate = (2S,4S)-4-hydroxy-2,3,4,5-tetrahydrodipicolinate + H2O + H(+). Its pathway is amino-acid biosynthesis; L-lysine biosynthesis via DAP pathway; (S)-tetrahydrodipicolinate from L-aspartate: step 3/4. In terms of biological role, catalyzes the condensation of (S)-aspartate-beta-semialdehyde [(S)-ASA] and pyruvate to 4-hydroxy-tetrahydrodipicolinate (HTPA). The sequence is that of 4-hydroxy-tetrahydrodipicolinate synthase from Mycobacterium leprae (strain Br4923).